A 62-amino-acid polypeptide reads, in one-letter code: Large ribosomal subunit protein uL30 (62 aa).

Belongs to the universal ribosomal protein uL30 family. In terms of assembly, part of the 50S ribosomal subunit.

The protein is Large ribosomal subunit protein uL30 of Heliobacterium modesticaldum (strain ATCC 51547 / Ice1).